Consider the following 128-residue polypeptide: 3-aminoacrylate deaminase RutC (128 aa).

The protein belongs to the RutC family. As to quaternary structure, homotrimer.

It carries out the reaction (Z)-3-aminoacrylate + H2O + H(+) = 3-oxopropanoate + NH4(+). Its function is as follows. Involved in pyrimidine catabolism. Catalyzes the deamination of 3-aminoacrylate to malonic semialdehyde, a reaction that can also occur spontaneously. RutC may facilitate the reaction and modulate the metabolic fitness, rather than catalyzing essential functions. This chain is 3-aminoacrylate deaminase RutC, found in Escherichia coli (strain SE11).